Reading from the N-terminus, the 135-residue chain is Succinate dehydrogenase assembly factor 3, mitochondrial (135 aa).

The N-terminal 12 residues, 1 to 12 (MRIFTRLLYAAP), are a transit peptide targeting the mitochondrion.

This sequence belongs to the complex I LYR family. SDHAF3 subfamily. As to quaternary structure, interacts with the iron-sulfur protein subunit within the SDH catalytic dimer.

It is found in the mitochondrion matrix. Functionally, plays an essential role in the assembly of succinate dehydrogenase (SDH), an enzyme complex (also referred to as respiratory complex II) that is a component of both the tricarboxylic acid (TCA) cycle and the mitochondrial electron transport chain, and which couples the oxidation of succinate to fumarate with the reduction of ubiquinone (coenzyme Q) to ubiquinol. Promotes maturation of the iron-sulfur protein subunit of the SDH catalytic dimer, protecting it from the deleterious effects of oxidants. May act together with SDHAF1. This is Succinate dehydrogenase assembly factor 3, mitochondrial from Emericella nidulans (strain FGSC A4 / ATCC 38163 / CBS 112.46 / NRRL 194 / M139) (Aspergillus nidulans).